The sequence spans 255 residues: Electron transfer flavoprotein beta subunit lysine methyltransferase (255 aa).

The transit peptide at 1–32 (MAFSLCWKAPRSQWSFLQALNSGFPLFPWRTV) directs the protein to the mitochondrion.

It belongs to the methyltransferase superfamily. ETFBKMT family. In terms of assembly, interacts with HSPD1; this protein may possibly be a methylation substrate.

Its subcellular location is the cytoplasm. It is found in the mitochondrion matrix. It catalyses the reaction L-lysyl-[protein] + 3 S-adenosyl-L-methionine = N(6),N(6),N(6)-trimethyl-L-lysyl-[protein] + 3 S-adenosyl-L-homocysteine + 3 H(+). In terms of biological role, protein-lysine methyltransferase that selectively trimethylates the flavoprotein ETFB in mitochondria. Thereby, may negatively regulate the function of ETFB in electron transfer from Acyl-CoA dehydrogenases to the main respiratory chain. The polypeptide is Electron transfer flavoprotein beta subunit lysine methyltransferase (Rattus norvegicus (Rat)).